The chain runs to 150 residues: MDNKELQKLTEDISETYFKKPFRHQALFNDRLKTTGGRYLLTSHNIELNRKYLIEHGREELIGIIKHELCHYHLHLEGKGYKHRDRDFRMLLQQVNAPRFCTPLKKKAENKKTYMYICTTCGQQYIKKRAMNPDRYRCGKCRGKIKRIFS.

A SprT-like domain is found at 6-147 (LQKLTEDISE…CGKCRGKIKR (142 aa)). His67 is a Zn(2+) binding site. Residue Glu68 is part of the active site. His71 is a Zn(2+) binding site.

It belongs to the SprT family. Zn(2+) is required as a cofactor.

The protein resides in the cytoplasm. The sequence is that of Protein SprT-like (ydcK) from Bacillus subtilis (strain 168).